The sequence spans 135 residues: Ribosome-binding factor A (135 aa).

This sequence belongs to the RbfA family. In terms of assembly, monomer. Binds 30S ribosomal subunits, but not 50S ribosomal subunits or 70S ribosomes.

The protein resides in the cytoplasm. One of several proteins that assist in the late maturation steps of the functional core of the 30S ribosomal subunit. Associates with free 30S ribosomal subunits (but not with 30S subunits that are part of 70S ribosomes or polysomes). Required for efficient processing of 16S rRNA. May interact with the 5'-terminal helix region of 16S rRNA. The polypeptide is Ribosome-binding factor A (Rhizobium meliloti (strain 1021) (Ensifer meliloti)).